The primary structure comprises 398 residues: Formate-dependent phosphoribosylglycinamide formyltransferase (398 aa).

N(1)-(5-phospho-beta-D-ribosyl)glycinamide contacts are provided by residues 21–22 (EL) and E81. ATP is bound by residues R113, K154, 194 to 197 (EEYV), and E202. An ATP-grasp domain is found at 118-314 (RFAAEKVKVP…EFQVHVRSAL (197 aa)). Mg(2+) contacts are provided by E273 and E285. N(1)-(5-phospho-beta-D-ribosyl)glycinamide is bound by residues D292, K362, and 369 to 370 (RR).

It belongs to the PurK/PurT family. Homodimer.

The catalysed reaction is N(1)-(5-phospho-beta-D-ribosyl)glycinamide + formate + ATP = N(2)-formyl-N(1)-(5-phospho-beta-D-ribosyl)glycinamide + ADP + phosphate + H(+). It participates in purine metabolism; IMP biosynthesis via de novo pathway; N(2)-formyl-N(1)-(5-phospho-D-ribosyl)glycinamide from N(1)-(5-phospho-D-ribosyl)glycinamide (formate route): step 1/1. Involved in the de novo purine biosynthesis. Catalyzes the transfer of formate to 5-phospho-ribosyl-glycinamide (GAR), producing 5-phospho-ribosyl-N-formylglycinamide (FGAR). Formate is provided by PurU via hydrolysis of 10-formyl-tetrahydrofolate. The protein is Formate-dependent phosphoribosylglycinamide formyltransferase of Sulfolobus acidocaldarius (strain ATCC 33909 / DSM 639 / JCM 8929 / NBRC 15157 / NCIMB 11770).